The following is a 597-amino-acid chain: Putative heat shock protein HSP 90-beta-3 (597 aa).

3 residues coordinate ATP: asparagine 46, aspartate 88, and lysine 107. The tract at residues 201–241 (DKEISDDEAEEEKGEKEEEDKDDEEKPKIKDVGSDEEDDSK) is disordered. Over residues 204–223 (ISDDEAEEEKGEKEEEDKDD) the composition is skewed to acidic residues. Residues 224–233 (EEKPKIKDVG) are compositionally biased toward basic and acidic residues. Arginine 334 is an ATP binding site. The stretch at 414–446 (LELPEDEEEKKKMEESKEKFENLCKLMKEILDK) forms a coiled coil. Residues 564 to 578 (DEDEVAAEEPSDAVP) show a composition bias toward acidic residues. Positions 564-597 (DEDEVAAEEPSDAVPDEIPPLEGDEDASRMEEVD) are disordered. Residues 593 to 597 (MEEVD) carry the TPR repeat-binding motif.

Belongs to the heat shock protein 90 family. As to quaternary structure, homodimer.

It is found in the cytoplasm. Functionally, putative molecular chaperone that may promote the maturation, structural maintenance and proper regulation of specific target proteins. This chain is Putative heat shock protein HSP 90-beta-3 (HSP90AB3P), found in Homo sapiens (Human).